A 338-amino-acid polypeptide reads, in one-letter code: Serpentine receptor class alpha-32 (338 aa).

7 consecutive transmembrane segments (helical) span residues 30–50, 63–83, 120–140, 152–172, 199–219, 249–269, and 289–309; these read VYVI…IHAI, ITHL…SYTI, RFLF…VILF, GEIL…LLHL, LTSY…MMWY, LNSL…FVLA, and TTPY…QWIG.

This sequence belongs to the nematode receptor-like protein sra family.

The protein resides in the membrane. The protein is Serpentine receptor class alpha-32 (sra-32) of Caenorhabditis elegans.